Reading from the N-terminus, the 360-residue chain is DNA replication and repair protein RecF (360 aa).

30-37 (GVNGAGKT) contacts ATP.

It belongs to the RecF family.

It localises to the cytoplasm. The RecF protein is involved in DNA metabolism; it is required for DNA replication and normal SOS inducibility. RecF binds preferentially to single-stranded, linear DNA. It also seems to bind ATP. The protein is DNA replication and repair protein RecF of Thioalkalivibrio sulfidiphilus (strain HL-EbGR7).